A 433-amino-acid polypeptide reads, in one-letter code: Pyrimidine-nucleoside phosphorylase (433 aa).

Residue 81-83 (KHS) coordinates phosphate. 2 residues coordinate K(+): Gly88 and Thr90. Residues Thr92, 108–110 (KMS), and Thr120 contribute to the phosphate site. 2 residues coordinate substrate: Arg168 and Lys187. Leu243, Ala246, and Glu255 together coordinate K(+).

This sequence belongs to the thymidine/pyrimidine-nucleoside phosphorylase family. Homodimer. Requires K(+) as cofactor.

The enzyme catalyses uridine + phosphate = alpha-D-ribose 1-phosphate + uracil. It catalyses the reaction thymidine + phosphate = 2-deoxy-alpha-D-ribose 1-phosphate + thymine. It carries out the reaction 2'-deoxyuridine + phosphate = 2-deoxy-alpha-D-ribose 1-phosphate + uracil. Catalyzes phosphorolysis of the pyrimidine nucleosides uridine, thymidine and 2'-deoxyuridine with the formation of the corresponding pyrimidine base and ribose-1-phosphate. In Staphylococcus epidermidis (strain ATCC 35984 / DSM 28319 / BCRC 17069 / CCUG 31568 / BM 3577 / RP62A), this protein is Pyrimidine-nucleoside phosphorylase (pdp).